We begin with the raw amino-acid sequence, 163 residues long: Bursicon (163 aa).

Residues 1–23 (MKSSVCVLLKVLACILLPGGLNA) form the signal peptide. 5 disulfide bridges follow: Cys-39–Cys-88, Cys-53–Cys-102, Cys-63–Cys-123, Cys-67–Cys-125, and Cys-85–Cys-128. Residues 39 to 129 (CQVTPVIHVL…PLECMCRPCT (91 aa)) enclose the CTCK domain.

In terms of assembly, heterodimer of burs and pburs.

Its subcellular location is the secreted. Functionally, final heterodimeric neurohormone released at the end of the molting cycle, involved in the sclerotization (tanning) of the insect cuticle, melanization and wing spreading. The chain is Bursicon from Aedes aegypti (Yellowfever mosquito).